The sequence spans 937 residues: Protein SEY1 homolog (937 aa).

At 1 to 848 (MEKGVEKTQI…ETGSKMSLKN (848 aa)) the chain is on the cytoplasmic side. Residues 34–280 (GFSYNVIAVL…IPSDGFAQYC (247 aa)) form the GB1/RHD3-type G domain. 44–51 (GSQSSGKS) contributes to the GTP binding site. 2 coiled-coil regions span residues 319-339 (NKEIKEKSIESHNKVIENFKE) and 725-750 (YLDEIMDVLKNKLDEISENLATIIIQ). A helical transmembrane segment spans residues 849–869 (VPVVFWIILLLFGWNEILFFI). Residues 870–872 (RMF) are Lumenal-facing. The chain crosses the membrane as a helical span at residues 873–893 (FKLNVILPLFFAAAFIVSTFV). Residues 894 to 937 (YNGNTQALSYINKIIFYMAKNSYNFFKHIQAISNPPPKNVQKQE) are Cytoplasmic-facing.

Belongs to the TRAFAC class dynamin-like GTPase superfamily. GB1/RHD3 GTPase family. RHD3 subfamily.

The protein localises to the endoplasmic reticulum membrane. In terms of biological role, probable GTP-binding protein involved in generating and maintaining the structure of the tubular endoplasmic reticulum network. The polypeptide is Protein SEY1 homolog (Plasmodium falciparum (isolate 3D7)).